Consider the following 176-residue polypeptide: Disulfide bond formation protein B (176 aa).

Residues 1–14 (MLQFLNRCSKGRGA) are Cytoplasmic-facing. A helical membrane pass occupies residues 15–31 (WLLMALTALVLELVALY). At 32-49 (FQHVMLLQPCVMCIYERA) the chain is on the periplasmic side. An intrachain disulfide couples C41 to C44. A helical transmembrane segment spans residues 50–65 (ALFGILGASLLGAIAP). Residues 66 to 71 (KSPLRY) are Cytoplasmic-facing. The chain crosses the membrane as a helical span at residues 72–89 (LAIFIWIYSAWKGVQLAW). Residues 90-144 (THTMLQLHPSPFTTCDFFVSFPSWLPLDKWFPAVFVASGDCAVKQWEFLSLEMPQ) are Periplasmic-facing. Residues C104 and C130 are joined by a disulfide bond. A helical transmembrane segment spans residues 145–163 (WLVGIFAAYLFIAILVLIS). The Cytoplasmic segment spans residues 164–176 (QFVKPKRRDLFSR).

This sequence belongs to the DsbB family.

It is found in the cell inner membrane. Its function is as follows. Required for disulfide bond formation in some periplasmic proteins. Acts by oxidizing the DsbA protein. This Yersinia enterocolitica serotype O:8 / biotype 1B (strain NCTC 13174 / 8081) protein is Disulfide bond formation protein B.